A 590-amino-acid chain; its full sequence is Interferon alpha/beta receptor 1 (590 aa).

An N-terminal signal peptide occupies residues 1 to 26 (MLAVVGAAALVLVAGAPWVLPSAAGG). Residues 27–429 (ENLKPPENID…EKTRPGSFST (403 aa)) lie on the Extracellular side of the membrane. Fibronectin type-III domains follow at residues 31-125 (PPEN…PFYT), 127-226 (HMSP…TTVA), 230-327 (PVPG…FIDS), and 332-425 (LPPP…TRPG). N43 is a glycosylation site (N-linked (GlcNAc...) asparagine). Cysteines 78 and 86 form a disulfide. N-linked (GlcNAc...) asparagine glycans are attached at residues N109, N181, and N214. 2 disulfide bridges follow: C199-C220 and C284-C292. 4 N-linked (GlcNAc...) asparagine glycosylation sites follow: N314, N370, N409, and N413. The cysteines at positions 397 and 419 are disulfide-linked. A helical membrane pass occupies residues 430 to 449 (IWIITGLGVVFFSVMVLYAL). Topologically, residues 450-590 (RSVWKYLCHV…ALRTEPALLC (141 aa)) are cytoplasmic. Residues 483–492 (VLLTAEEHTE) are important for interaction with TYK2. The tract at residues 514–545 (DLRKYSSQTSQDSGNYSNEEEESVGTESGQAV) is disordered. Residue K517 forms a Glycyl lysine isopeptide (Lys-Gly) (interchain with G-Cter in ubiquitin) linkage. Over residues 518–530 (YSSQTSQDSGNYS) the composition is skewed to polar residues. S526 bears the Phosphoserine mark.

The protein belongs to the type II cytokine receptor family. Heterodimer with IFNAR2; forming the receptor for type I interferon. Interacts with TYK2. Interacts with STAT1 and STAT2. Interacts (serine-phosphorylated form) with FBXW11, the substrate recognition component of a SCF (SKP1-CUL1-F-box protein) E3 ubiquitin-protein ligase complex. 3Interacts with SHMT2; this promotes interaction with ABRAXAS2 and the BRISC complex. Interacts with TRIM10; this interaction prevents association between IFNAR1 and TYK2. Post-translationally, ubiquitinated. This leads to its internalization and lysosomal degradation. The 'Lys-63'-linked ubiquitin chains are cleaved off by the BRISC complex; this prevents receptor internalization and degradation. Probable ubiquitination sites have been identified in human, but are poorly conserved across species. In terms of processing, phosphorylated on serine residues in response to interferon binding; this promotes interaction with FBXW11 and ubiquitination.

It localises to the cell membrane. It is found in the late endosome. The protein localises to the lysosome. Its function is as follows. Together with IFNAR2, forms the heterodimeric receptor for type I interferons (including interferons alpha, beta, epsilon, omega and kappa). Type I interferon binding activates the JAK-STAT signaling cascade, and triggers tyrosine phosphorylation of a number of proteins including JAKs, TYK2, STAT proteins and the IFNR alpha- and beta-subunits themselves. STAT proteins are then phosphorylated by the JAKs, promoting their translocation into the nucleus to regulate expression of interferon-regulated genes. Can also act independently of IFNAR2: form an active IFNB1 receptor by itself and activate a signaling cascade that does not involve activation of the JAK-STAT pathway. This chain is Interferon alpha/beta receptor 1 (Ifnar1), found in Mus musculus (Mouse).